Consider the following 1166-residue polypeptide: Myosin-1 (1166 aa).

Residues 1–13 (MSQKVTPFMQSLK) are compositionally biased toward polar residues. Positions 1 to 71 (MSQKVTPFMQ…AGDSEDSPYS (71 aa)) are disordered. A Phosphoserine modification is found at Ser14. Positions 32 to 45 (NSSGASVRLTNSNV) are enriched in polar residues. Residues 112–161 (KKILQSWIQLPNGNWELGKILSTSGEESVISLPEGKVIKVISETLVPANP) enclose the Myosin N-terminal SH3-like domain. A Myosin motor domain is found at 165 to 837 (DGVDDLMQLS…QIGVLEDTRN (673 aa)). Residues 256–263 (GESGAGKT) and 304–312 (NDNSSRFGK) each bind ATP. 2 actin-binding regions span residues 589–623 (LFEK…KQHL) and 717–739 (LFQL…KPNN). IQ domains are found at residues 839–868 (TLHG…GISI), 862–891 (LKRG…RHKA), 888–917 (RHKA…ASVV), and 911–940 (IADA…LKSG). A coiled-coil region spans residues 955 to 1005 (SVLSELQRRVLKAEAALREKEEENDILQQRLQQYENRWSEYETKMKSMEEI). The interval 1030–1065 (ARNSDASVNASDATDWDSSSNQFRSQTSNGVGSRLQ) is disordered. Positions 1032–1060 (NSDASVNASDATDWDSSSNQFRSQTSNGV) are enriched in polar residues.

This sequence belongs to the TRAFAC class myosin-kinesin ATPase superfamily. Myosin family. Plant myosin class VIII subfamily. In terms of assembly, homodimer.

It is found in the cell junction. The protein localises to the plasmodesma. The protein resides in the cytoplasm. Its subcellular location is the cytoskeleton. It localises to the phragmoplast. It is found in the endosome. The protein localises to the endoplasmic reticulum. Functionally, myosin heavy chain that is required for the cell cycle-regulated transport of various organelles and proteins for their segregation. Functions by binding with its tail domain to receptor proteins on organelles and exerting force with its N-terminal motor domain against actin filaments, thereby transporting its cargo along polarized actin cables. Involved in endocytosis via its action in endosomal trafficking. The protein is Myosin-1 (VIII-1) of Arabidopsis thaliana (Mouse-ear cress).